A 742-amino-acid polypeptide reads, in one-letter code: Hapless 2 (742 aa).

The signal sequence occupies residues 1–19 (MKFLAFGLIYFHFCILNRC). Residues 20–540 (EYITSSTIQK…CYFSAGCIKE (521 aa)) are Extracellular-facing. 7 cysteine pairs are disulfide-bonded: Cys30–Cys40, Cys118–Cys147, Cys129–Cys182, Cys148–Cys312, Cys150–Cys168, Cys295–Cys319, and Cys431–Cys470. Residues 152–179 (LSDILGMGNDLSRGKVCYALNLGAGSAT) are important for membrane fusion. The chain crosses the membrane as a helical span at residues 541-561 (AFKSIASIAGVASALALVIFL). The Cytoplasmic segment spans residues 562 to 742 (AKNGYLVPII…STSPLYLLIE (181 aa)).

The protein belongs to the HAP2/GCS1 family.

Its subcellular location is the cell membrane. The protein resides in the cell junction. Functionally, during fertilization, required for the formation of intercellular membrane pores and subsequent exchange of gametic pronuclei between cells. Probably initiates the formation of intercellular membrane pores by inserting part of its extracellular domain into the cell membrane of the adjoining cell in the mating pair. Mating requires the presence of HAP2 on at least one of the two cells. Mating efficiency is high when HAP2 is present on both cells, and is strongly reduced when HAP2 is present on only one of the two cells. In Tetrahymena thermophila, this protein is Hapless 2.